The primary structure comprises 235 residues: Bypass of stop codon protein 2 (235 aa).

A helical membrane pass occupies residues 68–88 (FGIFQLMCSLGVIVLLLPIII). A Phosphoserine modification is found at Ser177.

It localises to the lipid droplet. The protein localises to the membrane. The sequence is that of Bypass of stop codon protein 2 (BSC2) from Saccharomyces cerevisiae (strain ATCC 204508 / S288c) (Baker's yeast).